Here is a 482-residue protein sequence, read N- to C-terminus: MAQTQGTRRKVCYYYDGDVGNYYYGQGHPMKPHRIRMTHNLLLNYGLYRKMEIYRPHKANAEEMTKYHSDDYIKFLRSIRPDNMSEYSKQMQRFNVGEDCPVFDGLFEFCQLSTGGSVASAVKLNKQQTDIAVNWAGGLHHAKKSEASGFCYVNDIVLAILELLKYHQRVLYIDIDIHHGDGVEEAFYTTDRVMTVSFHKYGEYFPGTGDLRDIGAGKGKYYAVNYPLRDGIDDESYEAIFKPVMSKVMEMFQPSAVVLQCGSDSLSGDRLGCFNLTIKGHAKCVEFVKSFNLPMLMLGGGGYTIRNVARCWTYETAVALDTEIPNELPYNDYFEYFGPDFKLHISPSNMTNQNTNEYLEKIKQRLFENLRMLPHAPGVQMQAIPEDAIPEESGDEDEDDPDKRISICSSDKRIACEEEFSDSEEEGEGGRKNSSNFKKAKRVKTEDEKEKDPEEKKEVTEEEKTKEEKPEAKGVKEEVKLA.

The tract at residues 9–321 (RKVCYYYDGD…WTYETAVALD (313 aa)) is histone deacetylase. 2 residues coordinate 1D-myo-inositol 1,4,5,6-tetrakisphosphate: G27 and K31. The residue at position 74 (K74) is an N6-acetyllysine; alternate. Residue K74 forms a Glycyl lysine isopeptide (Lys-Gly) (interchain with G-Cter in SUMO2); alternate linkage. Residue H141 is part of the active site. Residues D176 and H178 each coordinate Zn(2+). Position 220 is an N6-acetyllysine (K220). The residue at position 261 (C261) is an S-nitrosocysteine. D264 provides a ligand contact to Zn(2+). Position 270 (R270) interacts with 1D-myo-inositol 1,4,5,6-tetrakisphosphate. C273 is subject to S-nitrosocysteine. Over residues 390 to 400 (PEESGDEDEDD) the composition is skewed to acidic residues. Residues 390 to 482 (PEESGDEDED…KGVKEEVKLA (93 aa)) are disordered. Phosphoserine is present on residues S393, S406, and S409. Residues 401-416 (PDKRISICSSDKRIAC) show a composition bias toward basic and acidic residues. A compositionally biased stretch (acidic residues) spans 417–427 (EEEFSDSEEEG). S421 and S423 each carry phosphoserine; by CK2. The residue at position 432 (K432) is an N6-methylated lysine; by EHMT2. A Glycyl lysine isopeptide (Lys-Gly) (interchain with G-Cter in SUMO2) cross-link involves residue K438. Over residues 443-482 (VKTEDEKEKDPEEKKEVTEEEKTKEEKPEAKGVKEEVKLA) the composition is skewed to basic and acidic residues. K444 participates in a covalent cross-link: Glycyl lysine isopeptide (Lys-Gly) (interchain with G-Cter in SUMO2); alternate. K444 participates in a covalent cross-link: Glycyl lysine isopeptide (Lys-Gly) (interchain with G-Cter in SUMO); alternate. Glycyl lysine isopeptide (Lys-Gly) (interchain with G-Cter in SUMO2) cross-links involve residues K456, K457, and K473. K476 is covalently cross-linked (Glycyl lysine isopeptide (Lys-Gly) (interchain with G-Cter in SUMO2); alternate). Residue K476 forms a Glycyl lysine isopeptide (Lys-Gly) (interchain with G-Cter in SUMO); alternate linkage. Residue K480 forms a Glycyl lysine isopeptide (Lys-Gly) (interchain with G-Cter in SUMO2) linkage.

The protein belongs to the histone deacetylase family. HD type 1 subfamily. As to quaternary structure, part of the core histone deacetylase (HDAC) complex composed of HDAC1, HDAC2, RBBP4 and RBBP7, the core complex associates with SIN3, SAP18 and SAP30 to form the SIN3 HDAC complex. Component of the nucleosome remodeling and deacetylase (NuRD) repressor complex, composed of core proteins MTA1, MTA2, MTA3, RBBP4, RBBP7, HDAC1, HDAC2, MBD2, MBD3, and peripherally associated proteins CDK2AP1, CDK2AP2, GATAD2A, GATAD2B, CHD3, CHD4 and CHD5. The exact stoichiometry of the NuRD complex is unknown, and some subunits such as MBD2 and MBD3, GATAD2A and GATAD2B, and CHD3, CHD4 and CHD5 define mutually exclusive NuRD complexes. Component of a BHC histone deacetylase complex that contains HDAC1, HDAC2, HMG20B/BRAF35, KDM1A, RCOR1/CoREST and PHF21A/BHC80. The BHC complex may also contain ZMYM2, ZNF217, ZMYM3, GSE1 and GTF2I. Component of a mSin3A corepressor complex that contains SIN3A, SAP130, SUDS3/SAP45, ARID4B/SAP180, HDAC1 and HDAC2. Component of the SIN3B complex, which includes SIN3B, HDAC1, PHF12 and MORF4L1. Found in a trimeric complex with APBB1 and TSHZ3; the interaction between HDAC1 and APBB1 is mediated by TSHZ3. Forms a complex comprising APPL1, RUVBL2, APPL2, CTNNB1 and HDAC2. Component of a RCOR/GFI/KDM1A/HDAC complex. Part of a complex composed of TRIM28, HDAC1, HDAC2 and EHMT2. Part of a complex containing at least CDYL, MIER1, MIER2, HDAC1 and HDAC2. The large PER complex involved in the histone deacetylation is composed of at least HDAC1, PER2, SFPQ and SIN3A. Associates with the 9-1-1 complex; interacts with HUS1. Found in a complex with DNMT3A and HDAC7. Found in a complex with YY1, SIN3A and GON4L. Identified in a histone deacetylase complex that contains DNTTIP1, HDAC1 and MIDEAS; this complex assembles into a tetramer that contains four copies of each protein chain. Found in a complex composed of at least SINHCAF, SIN3A, HDAC1, SAP30, RBBP4, OGT and TET1. Interacts with GFI1; the interaction is direct. Interacts directly with GFI1B. Interacts with TSHZ3 (via N-terminus); the interaction is direct. Interacts with APEX1; the interaction is not dependent on the acetylated status of APEX1. Interacts with BANP. Interacts with BAZ2A/TIP5. Interacts with BCL6. Interacts with BCOR. Interacts with BHLHE40/DEC1. Interacts with BRCC3; this interaction is enhanced in the presence of PWWP2B. Interacts with BRMS1. Interacts with BRMS1L. Interacts with C10orf90/FATS (via its N-terminal); the interaction prevents binding of HDAC1 to CDKN1A/p21 and facilitates the acetylation and stabilization of CDKN1A/p21. Interacts with CBFA2T3. Interacts with CCAR2. Interacts with CDK2AP1. Interacts with CHD3. Interacts with CHD4. Interacts with CHFR. Interacts with CIART. Interacts with CDKN1A/p21. Interacts with CDK5 complexed to CDK5R1 (p25). Interacts with CRY1. Interacts with DAXX. Interacts with DDIT3/CHOP. Interacts with DDX5. Interacts with DHX36; this interaction occurs in a RNA-dependent manner. Interacts with DNMT1. Interacts with DNTTIP1. Interacts with E4F1. Interacts with EP300. Interacts with ERCC6. Interacts with GATAD2A. Interacts with HCFC1. Interacts with HDAC9. Interacts with HUS1. Interacts with INSM1. Interacts with KDM4A. Interacts with KDM5A; this interaction impairs histone deacetylation. Interacts with KDM5B. Interacts with KLF1. Interacts with MBD3L2. Interacts with MIER1. Interacts with NFE4. Interacts with NR4A2/NURR1. Interacts with NR1D2 (via C-terminus). Interacts with NRIP1. Interacts with NSD2. Interacts with PACS2. Interacts with PHB2. Interacts with PPHLN1. Interacts with PRDM6. Interacts with PRDM16. Interacts with PWWP2A in a MTA1-dependent manner. Interacts with PWWP2B. Interacts with RB1. Interacts with RERE. Interacts with SANBR (via the BTB domain). Interacts with SAMSN1. Interacts with SAP30L. Interacts with SETDB1. Interacts with SIN3A. Interacts with SMAD3. Interacts with SMAD4; positively regulated by ZBTB7A. Interacts with SMARCAD1. Interacts with SMARCA4/BRG1. Interacts with SMYD2. Interacts with SMYD4 (via MYND-type zinc finger). Interacts with SP1; the interaction deacetylates SP1 and regulates its transcriptional activity. Interacts with SP3; the interaction deacetylates SP3 and regulates its transcriptional activity. In vitro, C(18) ceramides increase this interaction and the subsequent SP3 deacetylation and SP3-mediated repression of the TERT promoter. Interacts with SPEN/MINT. Interacts with SPHK2. Interacts with SUV39H1. Interacts with TGIF. Interacts with TGIF2. Interacts with TRAF6. Interacts with TRIM28; the interaction recruits HDAC1 to E2F1 and inhibits its acetylation. Interacts with TSC22D3 isoform 1; this interaction affects HDAC1 activity on MYOG promoter and thus inhibits MYOD1 transcriptional activity. Interacts with UHRF1. Interacts with UHRF2. Interacts with ZBTB7A. Interacts with ZMYND8. Interacts with ZMYND15. Interacts with ZNF431. Interacts with ZNF516; this interaction is enhanced in the presence of PWWP2B. Interacts with ZNF541. Interacts with ZNF638. Interacts with ZNHIT1. Interacts with the non-histone region of MACROH2A1. Identified in a complex with HDAC2, KCTD19, DNTTIP1 and ZNF541. Interacts with VRK1. In terms of assembly, (Microbial infection) Interacts with SV40 large T antigen. Zn(2+) serves as cofactor. Post-translationally, sumoylated on Lys-444 and Lys-476; which promotes enzymatic activity. Desumoylated by SENP1. Phosphorylation on Ser-421 and Ser-423 promotes enzymatic activity and interactions with NuRD and SIN3 complexes. Phosphorylated by CDK5. In terms of processing, ubiquitinated by CHFR, leading to its degradation by the proteasome. Ubiquitinated by KCTD11, leading to proteasomal degradation. Ubiquitous, with higher levels in heart, pancreas and testis, and lower levels in kidney and brain.

It localises to the nucleus. It carries out the reaction N(6)-acetyl-L-lysyl-[histone] + H2O = L-lysyl-[histone] + acetate. The enzyme catalyses N(6)-acetyl-L-lysyl-[protein] + H2O = L-lysyl-[protein] + acetate. It catalyses the reaction N(6)-(2E)-butenoyl-L-lysyl-[protein] + H2O = (2E)-2-butenoate + L-lysyl-[protein]. The catalysed reaction is N(6)-[(S)-lactoyl]-L-lysyl-[protein] + H2O = (S)-lactate + L-lysyl-[protein]. Its activity is regulated as follows. Inositol tetraphosphate (1D-myo-inositol 1,4,5,6-tetrakisphosphate) may act as an intermolecular glue between HDAC1 and N-Cor repressor complex components. In terms of biological role, histone deacetylase that catalyzes the deacetylation of lysine residues on the N-terminal part of the core histones (H2A, H2B, H3 and H4). Histone deacetylation gives a tag for epigenetic repression and plays an important role in transcriptional regulation, cell cycle progression and developmental events. Histone deacetylases act via the formation of large multiprotein complexes. Acts as a component of the histone deacetylase NuRD complex which participates in the remodeling of chromatin. As part of the SIN3B complex is recruited downstream of the constitutively active genes transcriptional start sites through interaction with histones and mitigates histone acetylation and RNA polymerase II progression within transcribed regions contributing to the regulation of transcription. Also functions as a deacetylase for non-histone targets, such as NR1D2, RELA, SP1, SP3, STAT3 and TSHZ3. Deacetylates SP proteins, SP1 and SP3, and regulates their function. Component of the BRG1-RB1-HDAC1 complex, which negatively regulates the CREST-mediated transcription in resting neurons. Upon calcium stimulation, HDAC1 is released from the complex and CREBBP is recruited, which facilitates transcriptional activation. Deacetylates TSHZ3 and regulates its transcriptional repressor activity. Deacetylates 'Lys-310' in RELA and thereby inhibits the transcriptional activity of NF-kappa-B. Deacetylates NR1D2 and abrogates the effect of KAT5-mediated relieving of NR1D2 transcription repression activity. Component of a RCOR/GFI/KDM1A/HDAC complex that suppresses, via histone deacetylase (HDAC) recruitment, a number of genes implicated in multilineage blood cell development. Involved in CIART-mediated transcriptional repression of the circadian transcriptional activator: CLOCK-BMAL1 heterodimer. Required for the transcriptional repression of circadian target genes, such as PER1, mediated by the large PER complex or CRY1 through histone deacetylation. In addition to protein deacetylase activity, also has protein-lysine deacylase activity: acts as a protein decrotonylase and delactylase by mediating decrotonylation ((2E)-butenoyl) and delactylation (lactoyl) of histones, respectively. This chain is Histone deacetylase 1, found in Homo sapiens (Human).